Here is a 550-residue protein sequence, read N- to C-terminus: CTP synthase (550 aa).

An amidoligase domain region spans residues Met-1–Leu-270. CTP is bound at residue Ser-13. UTP is bound at residue Ser-13. ATP contacts are provided by residues Ser-14–Ile-19 and Asp-71. Mg(2+)-binding residues include Asp-71 and Glu-144. Residues Asp-151–Glu-153, Lys-191–Gln-196, and Lys-227 each bind CTP. UTP-binding positions include Lys-191–Gln-196 and Lys-227. The Glutamine amidotransferase type-1 domain maps to Thr-295 to Arg-547. Gly-356 provides a ligand contact to L-glutamine. Cys-383 acts as the Nucleophile; for glutamine hydrolysis in catalysis. L-glutamine-binding positions include Leu-384–Gln-387, Glu-407, and Arg-473. Active-site residues include His-520 and Glu-522.

The protein belongs to the CTP synthase family. In terms of assembly, homotetramer.

The catalysed reaction is UTP + L-glutamine + ATP + H2O = CTP + L-glutamate + ADP + phosphate + 2 H(+). It carries out the reaction L-glutamine + H2O = L-glutamate + NH4(+). The enzyme catalyses UTP + NH4(+) + ATP = CTP + ADP + phosphate + 2 H(+). It participates in pyrimidine metabolism; CTP biosynthesis via de novo pathway; CTP from UDP: step 2/2. With respect to regulation, allosterically activated by GTP, when glutamine is the substrate; GTP has no effect on the reaction when ammonia is the substrate. The allosteric effector GTP functions by stabilizing the protein conformation that binds the tetrahedral intermediate(s) formed during glutamine hydrolysis. Inhibited by the product CTP, via allosteric rather than competitive inhibition. Its function is as follows. Catalyzes the ATP-dependent amination of UTP to CTP with either L-glutamine or ammonia as the source of nitrogen. Regulates intracellular CTP levels through interactions with the four ribonucleotide triphosphates. This Cupriavidus pinatubonensis (strain JMP 134 / LMG 1197) (Cupriavidus necator (strain JMP 134)) protein is CTP synthase.